The chain runs to 948 residues: Coatomer subunit beta-1 (948 aa).

6 HEAT repeats span residues 49–87 (ETIP…TDSK), 92–126 (PEMI…MKET), 127–164 (EIVE…LPQG), 274–311 (TAIR…TLHR), 312–349 (DIMV…HHNI), and 391–428 (EVAS…TNPK).

Oligomeric complex that consists of at least the alpha, beta, beta', gamma, delta, epsilon and zeta subunits.

It is found in the cytoplasm. The protein resides in the golgi apparatus membrane. The protein localises to the cytoplasmic vesicle. It localises to the COPI-coated vesicle membrane. Functionally, the coatomer is a cytosolic protein complex that binds to dilysine motifs and reversibly associates with Golgi non-clathrin-coated vesicles, which further mediate biosynthetic protein transport from the ER, via the Golgi up to the trans Golgi network. Coatomer complex is required for budding from Golgi membranes, and is essential for the retrograde Golgi-to-ER transport of dilysine-tagged proteins. The chain is Coatomer subunit beta-1 from Arabidopsis thaliana (Mouse-ear cress).